The sequence spans 498 residues: Glycerol kinase (498 aa).

Residue Thr12 participates in ADP binding. Thr12, Thr13, and Ser14 together coordinate ATP. Thr12 lines the sn-glycerol 3-phosphate pocket. Arg16 provides a ligand contact to ADP. Arg82, Glu83, Tyr134, and Asp241 together coordinate sn-glycerol 3-phosphate. Glycerol is bound by residues Arg82, Glu83, Tyr134, Asp241, and Gln242. ADP-binding residues include Thr263 and Gly310. Residues Thr263, Gly310, Gln314, and Gly411 each coordinate ATP. The ADP site is built by Gly411 and Asn415.

Belongs to the FGGY kinase family.

It catalyses the reaction glycerol + ATP = sn-glycerol 3-phosphate + ADP + H(+). The protein operates within polyol metabolism; glycerol degradation via glycerol kinase pathway; sn-glycerol 3-phosphate from glycerol: step 1/1. Inhibited by fructose 1,6-bisphosphate (FBP). In terms of biological role, key enzyme in the regulation of glycerol uptake and metabolism. Catalyzes the phosphorylation of glycerol to yield sn-glycerol 3-phosphate. This Herminiimonas arsenicoxydans protein is Glycerol kinase.